The chain runs to 410 residues: Elongation factor Tu, chloroplastic (410 aa).

Positions 10-213 (KPHLNIGTIG…TVDEYIPTPK (204 aa)) constitute a tr-type G domain. The tract at residues 19-26 (GHVDHGKT) is G1. A GTP-binding site is contributed by 19-26 (GHVDHGKT). Residue T26 participates in Mg(2+) binding. The segment at 60 to 64 (GITIN) is G2. The G3 stretch occupies residues 81–84 (DCPG). GTP-binding positions include 81–85 (DCPGH) and 136–139 (NKAD). The interval 136-139 (NKAD) is G4. Residues 174-176 (SAI) form a G5 region.

Belongs to the TRAFAC class translation factor GTPase superfamily. Classic translation factor GTPase family. EF-Tu/EF-1A subfamily.

The protein localises to the plastid. It is found in the chloroplast. It catalyses the reaction GTP + H2O = GDP + phosphate + H(+). GTP hydrolase that promotes the GTP-dependent binding of aminoacyl-tRNA to the A-site of ribosomes during protein biosynthesis. This chain is Elongation factor Tu, chloroplastic (tufA), found in Codium fragile (Dead man's fingers).